A 275-amino-acid chain; its full sequence is Diaminopimelate epimerase (275 aa).

Substrate-binding residues include N20 and N63. C72 acts as the Proton donor in catalysis. Substrate-binding positions include 73-74 (GN), N179, and 197-198 (ER). C207 functions as the Proton acceptor in the catalytic mechanism. Substrate is bound at residue 208-209 (GT).

It belongs to the diaminopimelate epimerase family. In terms of assembly, homodimer.

It localises to the cytoplasm. The catalysed reaction is (2S,6S)-2,6-diaminopimelate = meso-2,6-diaminopimelate. It functions in the pathway amino-acid biosynthesis; L-lysine biosynthesis via DAP pathway; DL-2,6-diaminopimelate from LL-2,6-diaminopimelate: step 1/1. Its function is as follows. Catalyzes the stereoinversion of LL-2,6-diaminopimelate (L,L-DAP) to meso-diaminopimelate (meso-DAP), a precursor of L-lysine and an essential component of the bacterial peptidoglycan. This is Diaminopimelate epimerase from Chlamydia trachomatis serovar L2 (strain ATCC VR-902B / DSM 19102 / 434/Bu).